A 204-amino-acid chain; its full sequence is uncharacterized protein (204 aa).

Its subcellular location is the mitochondrion. This is an uncharacterized protein from Arabidopsis thaliana (Mouse-ear cress).